Consider the following 634-residue polypeptide: Microtubule-associated protein 70-2 (634 aa).

Residues 1–57 are disordered; the sequence is MSDVSGDGDLSATVTEHEVTPQPPVSSATYPSLTVSASYKESSGGKSSSKRRPIRPS. Residues 25 to 35 are compositionally biased toward polar residues; sequence VSSATYPSLTV. Over residues 36-47 the composition is skewed to low complexity; sequence SASYKESSGGKS. Residues 74–392 are a coiled coil; sequence DPVKVELNRL…LRLKVLEETL (319 aa). The interval 258–494 is required for targeting to microtubules; sequence ILDRMHRQKV…YSFNKATDDS (237 aa). Composition is skewed to polar residues over residues 393–417 and 443–464; these read RGTS…SRRQ and MRHS…TSKS. Disordered regions lie at residues 393 to 526 and 594 to 634; these read RGTS…SVPG and VEKD…KSTQ. Residues 532–601 are a coiled coil; it reads LQKEVVSLRK…MRVEKDQDAR (70 aa). The span at 605 to 616 shows a compositional bias: polar residues; it reads FSNSKSPSNTAQ.

Belongs to the MAP70 family.

The protein resides in the cytoplasm. Its subcellular location is the cytoskeleton. In terms of biological role, plant-specific protein that interact with microtubules. This chain is Microtubule-associated protein 70-2 (MAP70.2), found in Arabidopsis thaliana (Mouse-ear cress).